We begin with the raw amino-acid sequence, 116 residues long: MDKKSSRLRRATRARKKIQELGVHRLVVHRTPRHIYAQVINPEAQVVAAASTVEKSIKEALKSTGNVDAAKAVGKAIAERAVEKGVTVVAFDRSGFKYHGRVAALADAAREAGLQF.

The protein belongs to the universal ribosomal protein uL18 family. In terms of assembly, part of the 50S ribosomal subunit; part of the 5S rRNA/L5/L18/L25 subcomplex. Contacts the 5S and 23S rRNAs.

Its function is as follows. This is one of the proteins that bind and probably mediate the attachment of the 5S RNA into the large ribosomal subunit, where it forms part of the central protuberance. The polypeptide is Large ribosomal subunit protein uL18 (Shewanella amazonensis (strain ATCC BAA-1098 / SB2B)).